A 63-amino-acid chain; its full sequence is Kappa-theraphotoxin-Cg3a 1 (63 aa).

An N-terminal signal peptide occupies residues 1–21 (MKNTSILFILGLALLLVLAFE). Positions 22 to 29 (VQVGESDG) are excised as a propeptide. Intrachain disulfides connect Cys31–Cys46, Cys38–Cys51, and Cys45–Cys58.

It belongs to the neurotoxin 10 (Hwtx-1) family. 44 (Jztx-4) subfamily. In terms of tissue distribution, expressed by the venom gland.

It localises to the secreted. Gating modifier of Kv2.1/KCNB1, Kv2.2/KCNB2 and Kv4.3/KCND3 channels. The protein is Kappa-theraphotoxin-Cg3a 1 of Chilobrachys guangxiensis (Chinese earth tiger tarantula).